Consider the following 918-residue polypeptide: Protein translocase subunit SecA (918 aa).

Residues glutamine 87, glycine 105–threonine 109, and aspartate 494 contribute to the ATP site. The span at lysine 863–valine 883 shows a compositional bias: basic and acidic residues. The disordered stretch occupies residues lysine 863–lysine 918.

It belongs to the SecA family. Monomer and homodimer. Part of the essential Sec protein translocation apparatus which comprises SecA, SecYEG and auxiliary proteins SecDF. Other proteins may also be involved.

The protein resides in the cell inner membrane. It is found in the cytoplasm. It catalyses the reaction ATP + H2O + cellular proteinSide 1 = ADP + phosphate + cellular proteinSide 2.. Part of the Sec protein translocase complex. Interacts with the SecYEG preprotein conducting channel. Has a central role in coupling the hydrolysis of ATP to the transfer of proteins into and across the cell membrane, serving as an ATP-driven molecular motor driving the stepwise translocation of polypeptide chains across the membrane. This Leptospira biflexa serovar Patoc (strain Patoc 1 / Ames) protein is Protein translocase subunit SecA.